The primary structure comprises 197 residues: Holliday junction branch migration complex subunit RuvA (197 aa).

Residues 1–63 (MINKIHGKVI…ENELKLFGFL (63 aa)) form a domain I region. The domain II stretch occupies residues 64–139 (NSDEREIFKE…KLLINSELES (76 aa)). Residue Ser-139 is a region of interest, flexible linker. The tract at residues 140–197 (TGLFRFKELEESIVSMGFDRKIVNSKIREAFNLAEFANLKDSEKEQFLFKEVLKRISN) is domain III.

Belongs to the RuvA family. In terms of assembly, homotetramer. Forms an RuvA(8)-RuvB(12)-Holliday junction (HJ) complex. HJ DNA is sandwiched between 2 RuvA tetramers; dsDNA enters through RuvA and exits via RuvB. An RuvB hexamer assembles on each DNA strand where it exits the tetramer. Each RuvB hexamer is contacted by two RuvA subunits (via domain III) on 2 adjacent RuvB subunits; this complex drives branch migration. In the full resolvosome a probable DNA-RuvA(4)-RuvB(12)-RuvC(2) complex forms which resolves the HJ.

It is found in the cytoplasm. The RuvA-RuvB-RuvC complex processes Holliday junction (HJ) DNA during genetic recombination and DNA repair, while the RuvA-RuvB complex plays an important role in the rescue of blocked DNA replication forks via replication fork reversal (RFR). RuvA specifically binds to HJ cruciform DNA, conferring on it an open structure. The RuvB hexamer acts as an ATP-dependent pump, pulling dsDNA into and through the RuvAB complex. HJ branch migration allows RuvC to scan DNA until it finds its consensus sequence, where it cleaves and resolves the cruciform DNA. The chain is Holliday junction branch migration complex subunit RuvA from Borreliella burgdorferi (strain ATCC 35210 / DSM 4680 / CIP 102532 / B31) (Borrelia burgdorferi).